The chain runs to 110 residues: Large ribosomal subunit protein uL24 (110 aa).

It belongs to the universal ribosomal protein uL24 family. Part of the 50S ribosomal subunit.

In terms of biological role, one of two assembly initiator proteins, it binds directly to the 5'-end of the 23S rRNA, where it nucleates assembly of the 50S subunit. Functionally, one of the proteins that surrounds the polypeptide exit tunnel on the outside of the subunit. In Roseiflexus castenholzii (strain DSM 13941 / HLO8), this protein is Large ribosomal subunit protein uL24.